We begin with the raw amino-acid sequence, 249 residues long: Exosome complex component Rrp41 (249 aa).

Belongs to the RNase PH family. Rrp41 subfamily. As to quaternary structure, component of the archaeal exosome complex. Forms a hexameric ring-like arrangement composed of 3 Rrp41-Rrp42 heterodimers. The hexameric ring associates with a trimer of Rrp4 and/or Csl4 subunits.

The protein localises to the cytoplasm. Functionally, catalytic component of the exosome, which is a complex involved in RNA degradation. Has 3'-&gt;5' exoribonuclease activity. Can also synthesize heteromeric RNA-tails. This Thermococcus onnurineus (strain NA1) protein is Exosome complex component Rrp41.